The chain runs to 822 residues: Molybdenum cofactor sulfurase (822 aa).

The residue at position 239 (Lys-239) is an N6-(pyridoxal phosphate)lysine. Residue Cys-401 is part of the active site. The tract at residues 633-666 (TRISNPTRSSRRSQRALMPGSFPEDPSPTSEQPP) is disordered. In terms of domain architecture, MOSC spans 643-820 (RRSQRALMPG…VMVGDVVTPQ (178 aa)).

It belongs to the class-V pyridoxal-phosphate-dependent aminotransferase family. MOCOS subfamily. The cofactor is pyridoxal 5'-phosphate.

The catalysed reaction is Mo-molybdopterin + L-cysteine + AH2 = thio-Mo-molybdopterin + L-alanine + A + H2O. It functions in the pathway cofactor biosynthesis; molybdopterin biosynthesis. Functionally, sulfurates the molybdenum cofactor. Sulfation of molybdenum is essential for xanthine dehydrogenase (XDH) and aldehyde oxidase (ADO) enzymes in which molybdenum cofactor is liganded by 1 oxygen and 1 sulfur atom in active form. This is Molybdenum cofactor sulfurase from Aspergillus oryzae (strain ATCC 42149 / RIB 40) (Yellow koji mold).